The chain runs to 1216 residues: Apical endosomal glycoprotein (1216 aa).

An N-terminal signal peptide occupies residues Met1–Ala22. At Trp23–Ser1151 the chain is on the extracellular side. Residues Asn26–Tyr53 enclose the LDL-receptor class A 1; truncated domain. The MAM 1 domain maps to Phe64–Leu222. A glycan (N-linked (GlcNAc...) asparagine) is linked at Asn203. The LDL-receptor class A 2 domain occupies Asn228–Gly266. Disulfide bonds link Cys229-Cys241, Cys236-Cys254, and Cys248-Cys265. The MAM 2 domain occupies Ile269 to Pro425. The disordered stretch occupies residues Trp280–Arg307. Residues Asn281 and Asn339 are each glycosylated (N-linked (GlcNAc...) asparagine). Residues Val429–Asp455 are disordered. Residues Pro434–Pro449 are compositionally biased toward pro residues. Positions Ser456–Gly491 constitute an LDL-receptor class A 3 domain. 3 disulfide bridges follow: Cys457-Cys468, Cys464-Cys481, and Cys475-Cys490. MAM domains lie at Gly491–Pro644, Val654–Ala809, Asn811–Gln969, and Gly971–Gln1138. Asn583 and Asn636 each carry an N-linked (GlcNAc...) asparagine glycan. Asn835 carries N-linked (GlcNAc...) asparagine glycosylation. The chain crosses the membrane as a helical span at residues Val1152–Gly1172. The Cytoplasmic portion of the chain corresponds to Gly1173–Pro1216.

The protein resides in the membrane. Its function is as follows. Probably involved in the sorting and selective transport of receptors and ligands across polarized epithelia. This Homo sapiens (Human) protein is Apical endosomal glycoprotein.